Here is a 374-residue protein sequence, read N- to C-terminus: Chaperone protein DnaJ (374 aa).

A J domain is found at 5-70 (DYYEVLGLEK…DKKANYDRFG (66 aa)). The segment at 137 to 219 (GVEKSINITR…CHGAGHVRKK (83 aa)) adopts a CR-type zinc-finger fold. The Zn(2+) site is built by Cys-150, Cys-153, Cys-167, Cys-170, Cys-193, Cys-196, Cys-207, and Cys-210. CXXCXGXG motif repeat units lie at residues 150–157 (CETCGGTG), 167–174 (CDKCGGTG), 193–200 (CDKCGGRG), and 207–214 (CHECHGAG).

Belongs to the DnaJ family. In terms of assembly, homodimer. Zn(2+) is required as a cofactor.

It localises to the cytoplasm. Participates actively in the response to hyperosmotic and heat shock by preventing the aggregation of stress-denatured proteins and by disaggregating proteins, also in an autonomous, DnaK-independent fashion. Unfolded proteins bind initially to DnaJ; upon interaction with the DnaJ-bound protein, DnaK hydrolyzes its bound ATP, resulting in the formation of a stable complex. GrpE releases ADP from DnaK; ATP binding to DnaK triggers the release of the substrate protein, thus completing the reaction cycle. Several rounds of ATP-dependent interactions between DnaJ, DnaK and GrpE are required for fully efficient folding. Also involved, together with DnaK and GrpE, in the DNA replication of plasmids through activation of initiation proteins. The protein is Chaperone protein DnaJ of Clostridium acetobutylicum (strain ATCC 824 / DSM 792 / JCM 1419 / IAM 19013 / LMG 5710 / NBRC 13948 / NRRL B-527 / VKM B-1787 / 2291 / W).